The chain runs to 292 residues: 11-beta-hydroxysteroid dehydrogenase 1 (292 aa).

At 2 to 7 (HFMKKY) the chain is on the cytoplasmic side. A helical; Signal-anchor for type II membrane protein transmembrane segment spans residues 8–24 (LLPILVLFLAYYYYSTK). Topologically, residues 25–292 (EEFRPEMLQG…SFTFDKLISS (268 aa)) are lumenal. NADP(+)-binding positions include 41–67 (GASK…TARS), 92–93 (TM), and 119–121 (NHI). N-linked (GlcNAc...) asparagine glycosylation is present at N162. S170 lines the substrate pocket. The active-site Proton acceptor is the Y183. 183-187 (YSASK) provides a ligand contact to NADP(+). N-linked (GlcNAc...) asparagine glycosylation is present at N207. Position 218 to 222 (218 to 222 (INTET)) interacts with NADP(+).

The protein belongs to the short-chain dehydrogenases/reductases (SDR) family. As to quaternary structure, homodimer. Detected in adrenal gland, liver, kidney, testis, and at lower levels in brain and lung (at protein level).

The protein resides in the endoplasmic reticulum membrane. It catalyses the reaction an 11beta-hydroxysteroid + NADP(+) = an 11-oxosteroid + NADPH + H(+). The enzyme catalyses corticosterone + NADP(+) = 11-dehydrocorticosterone + NADPH + H(+). The catalysed reaction is a 7beta-hydroxysteroid + NADP(+) = a 7-oxosteroid + NADPH + H(+). It carries out the reaction 7-oxocholesterol + NADPH + H(+) = 7beta-hydroxycholesterol + NADP(+). It catalyses the reaction 7-oxocholesterol + NADPH + H(+) = 7alpha-hydroxycholesterol + NADP(+). The enzyme catalyses chenodeoxycholate + NADP(+) = 7-oxolithocholate + NADPH + H(+). The catalysed reaction is 7-oxolithocholate + NADPH + H(+) = ursodeoxycholate + NADP(+). It carries out the reaction glycochenodeoxycholate + NADP(+) = 7-oxoglycolithocholate + NADPH + H(+). It catalyses the reaction taurochenodeoxycholate + NADP(+) = 7-oxotaurolithocholate + NADPH + H(+). The enzyme catalyses tauroursodeoxycholate + NADP(+) = 7-oxotaurolithocholate + NADPH + H(+). The catalysed reaction is glycoursodeoxycholate + NADP(+) = 7-oxoglycolithocholate + NADPH + H(+). It carries out the reaction 7-oxopregnenolone + NADPH + H(+) = 7beta-hydroxypregnenolone + NADP(+). It catalyses the reaction 3beta,7alpha-dihydroxyandrost-5-en-17-one + NADP(+) = 3beta-hydroxy-5-androstene-7,17-dione + NADPH + H(+). The enzyme catalyses 3beta-hydroxy-5-androstene-7,17-dione + NADPH + H(+) = 3beta,7beta-dihydroxyandrost-5-en-17-one + NADP(+). The catalysed reaction is 3beta-hydroxy-5alpha-androstane-7,17-dione + NADPH + H(+) = 3beta,7beta-dihydroxy-5alpha-androstan-17-one + NADP(+). It participates in steroid metabolism. Functionally, controls the reversible conversion of biologically active glucocorticoids such as 11-dehydrocorticosterone to corticosterone in the presence of NADP(H). Participates in the corticosteroid receptor-mediated anti-inflammatory response, as well as metabolic and homeostatic processes. Bidirectional in vitro, predominantly functions as a reductase in vivo, thereby increasing the concentration of active glucocorticoids. It has broad substrate specificity, besides glucocorticoids, it accepts other steroid and sterol substrates. Interconverts 7-oxo- and 7-hydroxy-neurosteroids such as 7-oxopregnenolone and 7beta-hydroxypregnenolone, 7-oxodehydroepiandrosterone (3beta-hydroxy-5-androstene-7,17-dione) and 7beta-hydroxydehydroepiandrosterone (3beta,7beta-dihydroxyandrost-5-en-17-one), among others. Catalyzes reversibly the conversion of the major dietary oxysterol, 7-ketocholesterol (7-oxocholesterol), into the more polar 7-beta-hydroxycholesterol and 7-alpha-hhydroxycholesterol metabolites. 7-oxocholesterol is one of the most important oxysterols, it participates in several events such as induction of apoptosis, accumulation in atherosclerotic lesions, lipid peroxidation, and induction of foam cell formation. Mediates the 7-oxo reduction of 7-oxolithocholate mainly to chenodeoxycholate, and to a lesser extent to ursodeoxycholate, both in its free form and when conjugated to glycine or taurine, providing a link between glucocorticoid activation and bile acid metabolism. Catalyzes the synthesis of 7-beta-25-dihydroxycholesterol from 7-oxo-25-hydroxycholesterol in vitro, which acts as a ligand for the G-protein-coupled receptor (GPCR) Epstein-Barr virus-induced gene 2 (EBI2) and may thereby regulate immune cell migration. The polypeptide is 11-beta-hydroxysteroid dehydrogenase 1 (HSD11B1) (Mesocricetus auratus (Golden hamster)).